Reading from the N-terminus, the 164-residue chain is D-aminoacyl-tRNA deacylase (164 aa).

2 residues coordinate tRNA: Trp-72 and Phe-89. Thr-90 (nucleophile) is an active-site residue. A C-terminal adenosine nucleotide of tRNA motif is present at residues 104-107 (HLAK). The Gly-cisPro motif, allows the protein to recognize chirality of D-amino acids signature appears at 149–150 (GP).

This sequence belongs to the DTD family. As to quaternary structure, homodimer.

It localises to the cytoplasm. The catalysed reaction is glycyl-tRNA(Ala) + H2O = tRNA(Ala) + glycine + H(+). The enzyme catalyses a D-aminoacyl-tRNA + H2O = a tRNA + a D-alpha-amino acid + H(+). It carries out the reaction D-tyrosyl-tRNA(Tyr) + H2O = D-tyrosine + tRNA(Tyr). D-aminoacyl-tRNA deacylase, with no observable activity on tRNAs charged with their cognate L-amino acid. Probably acts by rejecting L-amino acids from its binding site rather than specific recognition of D-amino acids. Catalyzes the hydrolysis of D-tyrosyl-tRNA(Tyr), has no activity on correctly charged L-tyrosyl-tRNA(Tyr). Hydrolyzes correctly charged, achiral, glycyl-tRNA(Gly). Deacylates mischarged D.melanogaster and E.coli glycyl-tRNA(Ala). Probably acts via tRNA-based rather than protein-based catalysis. Acts on tRNAs only when the D-amino acid is either attached to the ribose 3'-OH or transferred to the 3'-OH from the 2'-OH through rapid transesterification. Binds a number of other D-amino acids (D-Arg, D-Glu, D-His, D-Lys, D-Ser), suggesting it may also deacylate other mischarged tRNAs. The chain is D-aminoacyl-tRNA deacylase from Plasmodium falciparum (isolate 3D7).